Consider the following 622-residue polypeptide: Threonine--tRNA ligase (622 aa).

The editing domain stretch occupies residues 1-141 (MKTLLIHSDY…SRKITTERKE (141 aa)). Residues 199–498 (PHVKYIKEKE…TLENRPPALP (300 aa)) form a catalytic region. Zn(2+) is bound by residues cysteine 291, histidine 343, and histidine 467.

It belongs to the class-II aminoacyl-tRNA synthetase family. As to quaternary structure, homodimer. The cofactor is Zn(2+).

It localises to the cytoplasm. It catalyses the reaction tRNA(Thr) + L-threonine + ATP = L-threonyl-tRNA(Thr) + AMP + diphosphate + H(+). Functionally, catalyzes the attachment of threonine to tRNA(Thr) in a two-step reaction: L-threonine is first activated by ATP to form Thr-AMP and then transferred to the acceptor end of tRNA(Thr). Also edits incorrectly charged L-seryl-tRNA(Thr). This chain is Threonine--tRNA ligase, found in Methanococcus maripaludis (strain C6 / ATCC BAA-1332).